The sequence spans 241 residues: Glucosamine-6-phosphate deaminase (241 aa).

The active-site Proton acceptor; for enolization step is Asp-67. Catalysis depends on Asn-136, which acts as the For ring-opening step. Catalysis depends on His-138, which acts as the Proton acceptor; for ring-opening step. The active-site For ring-opening step is Glu-143.

This sequence belongs to the glucosamine/galactosamine-6-phosphate isomerase family. NagB subfamily.

It carries out the reaction alpha-D-glucosamine 6-phosphate + H2O = beta-D-fructose 6-phosphate + NH4(+). Its pathway is amino-sugar metabolism; N-acetylneuraminate degradation; D-fructose 6-phosphate from N-acetylneuraminate: step 5/5. Catalyzes the reversible isomerization-deamination of glucosamine 6-phosphate (GlcN6P) to form fructose 6-phosphate (Fru6P) and ammonium ion. This chain is Glucosamine-6-phosphate deaminase, found in Clostridium acetobutylicum (strain ATCC 824 / DSM 792 / JCM 1419 / IAM 19013 / LMG 5710 / NBRC 13948 / NRRL B-527 / VKM B-1787 / 2291 / W).